A 505-amino-acid chain; its full sequence is MEESRAYLELHRSRHQDTLYPLFFRESIYGLACGHGSIFVENVGYNNKFSLLIVKRLITRMYQQTHFIIFTNDSNKNPFMGYNNHFYSQIILEGFVVVVEILFSLQFCISSLREFEIVKSYNNLRSIHSIFPFFEDKLIYLNHESDIRIPYPIHLEILVQILRYWIKDVSFFHLLRFFFSYYYNWNSIFTPKKWISTFFSKSNPRFFLFLYNLYVWEYESIFLFLRNKSSKLRLKYFRVFFERIFFYEKIEHLVEVSVKDCSYTLSFFKDTFMHYVRYQGKSILVSKNTPLLINKWKYYFIYLWQCHFDIWSRPGTIHINQLSQHSFHFLGYFLSIRPNLSVVRNQMLQNSFLIKMVMKRLDTIVPIIPLIRSLAKAKFCNVFGHPISKPVWANLSDFDIIDRFLRICRNFSHYYNGSAKKKSLYQIRYILRLSCIKTLARKHKSTARTFLKRLGSEKLLEEFFTEEEETFSLIFPRTSFTLKRLYIGRIWYLDILVRNDFVNHF.

This sequence belongs to the intron maturase 2 family. MatK subfamily.

The protein localises to the plastid. The protein resides in the chloroplast. Usually encoded in the trnK tRNA gene intron. Probably assists in splicing its own and other chloroplast group II introns. The protein is Maturase K of Glycine max (Soybean).